The primary structure comprises 298 residues: N-acetylmuramic acid 6-phosphate etherase (298 aa).

The SIS domain maps to 55-218; sequence ITESLRRGGR…STASMVRLGK (164 aa). The active-site Proton donor is Glu83. Glu114 is a catalytic residue.

Belongs to the GCKR-like family. MurNAc-6-P etherase subfamily. As to quaternary structure, homodimer.

The catalysed reaction is N-acetyl-D-muramate 6-phosphate + H2O = N-acetyl-D-glucosamine 6-phosphate + (R)-lactate. It participates in amino-sugar metabolism; N-acetylmuramate degradation. Its function is as follows. Specifically catalyzes the cleavage of the D-lactyl ether substituent of MurNAc 6-phosphate, producing GlcNAc 6-phosphate and D-lactate. The sequence is that of N-acetylmuramic acid 6-phosphate etherase from Mycolicibacterium smegmatis (strain ATCC 700084 / mc(2)155) (Mycobacterium smegmatis).